Here is a 338-residue protein sequence, read N- to C-terminus: uncharacterized protein (338 aa).

A helical transmembrane segment spans residues 20–40 (IFFTLTFSLSNLFLAICYLFL).

Its subcellular location is the membrane. This is an uncharacterized protein from Schizosaccharomyces pombe (strain 972 / ATCC 24843) (Fission yeast).